A 262-amino-acid polypeptide reads, in one-letter code: Small ribosomal subunit protein eS1z (262 aa).

A compositionally biased stretch (basic residues) spans 1–18; sequence MAVGKNKRISKGRKGGKK. Residues 1 to 21 form a disordered region; sequence MAVGKNKRISKGRKGGKKKAV.

It belongs to the eukaryotic ribosomal protein eS1 family. As to quaternary structure, component of the small ribosomal subunit. Mature ribosomes consist of a small (40S) and a large (60S) subunit. The 40S subunit contains about 33 different proteins and 1 molecule of RNA (18S). The 60S subunit contains about 49 different proteins and 3 molecules of RNA (25S, 5.8S and 5S).

The protein localises to the cytoplasm. The protein is Small ribosomal subunit protein eS1z of Arabidopsis thaliana (Mouse-ear cress).